The chain runs to 432 residues: Adenylosuccinate synthetase (432 aa).

GTP is bound by residues 13–19 (GDEGKGK) and 41–43 (GHT). Residue aspartate 14 is the Proton acceptor of the active site. Positions 14 and 41 each coordinate Mg(2+). IMP contacts are provided by residues 14 to 17 (DEGK), 39 to 42 (NAGH), threonine 130, arginine 144, glutamine 225, threonine 240, and arginine 304. Catalysis depends on histidine 42, which acts as the Proton donor. 300–306 (AVTGRPR) serves as a coordination point for substrate. GTP contacts are provided by residues arginine 306, 332–334 (KLD), and 415–417 (STG).

The protein belongs to the adenylosuccinate synthetase family. Homodimer. The cofactor is Mg(2+).

Its subcellular location is the cytoplasm. The enzyme catalyses IMP + L-aspartate + GTP = N(6)-(1,2-dicarboxyethyl)-AMP + GDP + phosphate + 2 H(+). The protein operates within purine metabolism; AMP biosynthesis via de novo pathway; AMP from IMP: step 1/2. In terms of biological role, plays an important role in the de novo pathway of purine nucleotide biosynthesis. Catalyzes the first committed step in the biosynthesis of AMP from IMP. The chain is Adenylosuccinate synthetase from Haemophilus influenzae (strain 86-028NP).